A 356-amino-acid chain; its full sequence is Homoserine O-acetyltransferase (356 aa).

Residues 50–335 (NVILVCHALT…DEPYGHDAFL (286 aa)) form the AB hydrolase-1 domain. Ser146 functions as the Nucleophile in the catalytic mechanism. Arg215 is a binding site for substrate. Catalysis depends on residues Asp302 and His331. Substrate is bound at residue Asp332.

This sequence belongs to the AB hydrolase superfamily. MetX family. As to quaternary structure, homodimer.

It is found in the cytoplasm. It catalyses the reaction L-homoserine + acetyl-CoA = O-acetyl-L-homoserine + CoA. It functions in the pathway amino-acid biosynthesis; L-methionine biosynthesis via de novo pathway; O-acetyl-L-homoserine from L-homoserine: step 1/1. In terms of biological role, transfers an acetyl group from acetyl-CoA to L-homoserine, forming acetyl-L-homoserine. The polypeptide is Homoserine O-acetyltransferase (Chlorobaculum tepidum (strain ATCC 49652 / DSM 12025 / NBRC 103806 / TLS) (Chlorobium tepidum)).